A 204-amino-acid polypeptide reads, in one-letter code: dITP/XTP pyrophosphatase (204 aa).

Residue 7-12 (TNNKDK) coordinates substrate. Mg(2+) contacts are provided by Asp38 and Asp74. Asp74 serves as the catalytic Proton acceptor. Residues Ser75, 156-159 (FGYD), Lys179, and 184-185 (HR) each bind substrate.

This sequence belongs to the HAM1 NTPase family. As to quaternary structure, homodimer. The cofactor is Mg(2+).

It carries out the reaction XTP + H2O = XMP + diphosphate + H(+). The enzyme catalyses dITP + H2O = dIMP + diphosphate + H(+). It catalyses the reaction ITP + H2O = IMP + diphosphate + H(+). Its function is as follows. Pyrophosphatase that catalyzes the hydrolysis of nucleoside triphosphates to their monophosphate derivatives, with a high preference for the non-canonical purine nucleotides XTP (xanthosine triphosphate), dITP (deoxyinosine triphosphate) and ITP. Seems to function as a house-cleaning enzyme that removes non-canonical purine nucleotides from the nucleotide pool, thus preventing their incorporation into DNA/RNA and avoiding chromosomal lesions. This is dITP/XTP pyrophosphatase from Campylobacter fetus subsp. fetus (strain 82-40).